The following is a 386-amino-acid chain: Convicilin (386 aa).

The first 29 residues, 1 to 29 (MATTIKSRFPLLLLLGIIFLASVVSVTYA), serve as a signal peptide directing secretion. Residues 33-199 (EGSEPRVPAQ…EERSSESQER (167 aa)) form a disordered region. 4 stretches are compositionally biased toward basic and acidic residues: residues 41-65 (AQRERGRQEGEKEEKRHGEWRPSYE), 74-91 (QRERGRQEGEKEEKRHGE), 104-144 (EKQK…RWER), and 153-186 (EEWRGSQRREDPEERARLRHREERTKRDRRHQRE). A Cupin type-1 domain is found at 202–359 (PFLFKSNKFL…SYNTRYETIE (158 aa)). The tract at residues 367 to 386 (EKDRKRRQQGEETDAIVKVS) is disordered.

It belongs to the 7S seed storage protein family.

The protein resides in the vacuole. It is found in the aleurone grain. Functionally, seed storage protein. The sequence is that of Convicilin (CVCB) from Pisum sativum (Garden pea).